Consider the following 307-residue polypeptide: Coproporphyrin III ferrochelatase (307 aa).

Residues Tyr-12, Arg-29, 45-46 (RY), Ser-53, and Tyr-124 contribute to the Fe-coproporphyrin III site. Fe(2+)-binding residues include His-181 and Glu-263.

Belongs to the ferrochelatase family.

The protein localises to the cytoplasm. The enzyme catalyses Fe-coproporphyrin III + 2 H(+) = coproporphyrin III + Fe(2+). It functions in the pathway porphyrin-containing compound metabolism; protoheme biosynthesis. Functionally, involved in coproporphyrin-dependent heme b biosynthesis. Catalyzes the insertion of ferrous iron into coproporphyrin III to form Fe-coproporphyrin III. This Staphylococcus saprophyticus subsp. saprophyticus (strain ATCC 15305 / DSM 20229 / NCIMB 8711 / NCTC 7292 / S-41) protein is Coproporphyrin III ferrochelatase.